Consider the following 254-residue polypeptide: MLLAIDVGNTNIVLGIFAGHELKCHWRVASDRQKTADEYGLILRQLAHYQGLDLKEIQGVVLASVVPTLTQVLTEMITKQLGHQPLVIGPGVKTGMPIRFENPREVGADRIVNGVAVYELYGGPAIVVDFGTATTFDAISEKGEYLGGAIAPGIGIATDALFARAAKLPRVELVRPPRLIGKNTVACMQAGIMYGFIGQVEGIITRMQAEMGGKAIVVATGGLAGLIGPEVNCIDRVDPMLTLEGLRIVYERNT.

An ATP-binding site is contributed by 6–13 (DVGNTNIV). Residues Phe100 and 107-110 (GADR) contribute to the substrate site. Asp109 functions as the Proton acceptor in the catalytic mechanism. Asp129 contacts K(+). Thr132 contacts ATP. Thr184 contacts substrate.

The protein belongs to the type III pantothenate kinase family. Homodimer. NH4(+) serves as cofactor. The cofactor is K(+).

It is found in the cytoplasm. The enzyme catalyses (R)-pantothenate + ATP = (R)-4'-phosphopantothenate + ADP + H(+). It participates in cofactor biosynthesis; coenzyme A biosynthesis; CoA from (R)-pantothenate: step 1/5. Functionally, catalyzes the phosphorylation of pantothenate (Pan), the first step in CoA biosynthesis. In Moorella thermoacetica (strain ATCC 39073 / JCM 9320), this protein is Type III pantothenate kinase.